The primary structure comprises 212 residues: Ribosomal RNA small subunit methyltransferase G (212 aa).

S-adenosyl-L-methionine-binding positions include Gly-73, Phe-78, 124–125 (IE), and Arg-137.

The protein belongs to the methyltransferase superfamily. RNA methyltransferase RsmG family.

It localises to the cytoplasm. Functionally, specifically methylates the N7 position of a guanine in 16S rRNA. The chain is Ribosomal RNA small subunit methyltransferase G from Karelsulcia muelleri (strain GWSS) (Sulcia muelleri).